We begin with the raw amino-acid sequence, 75 residues long: uncharacterized protein (75 aa).

2 consecutive transmembrane segments (helical) span residues 5–25 and 42–62; these read VIIC…IFEI and VAIF…GSVL.

It is found in the membrane. This is an uncharacterized protein from Saccharomyces cerevisiae (strain ATCC 204508 / S288c) (Baker's yeast).